A 551-amino-acid polypeptide reads, in one-letter code: Probable aldehyde dehydrogenase (551 aa).

NAD(+) is bound at residue 278-283 (GSSRVA). Catalysis depends on E297, which acts as the Proton acceptor. C332 acts as the Nucleophile in catalysis.

The protein belongs to the aldehyde dehydrogenase family. In terms of tissue distribution, in uninfected plants, highest levels found in stems. In plants infected with the flax rust, highest levels in leaves. Higher levels of expression in infected leaves than uninfected stems.

It catalyses the reaction an aldehyde + NAD(+) + H2O = a carboxylate + NADH + 2 H(+). Could be involved in facilitating the biotrophic relationship between the plant and the rust fungus. In Linum usitatissimum (Flax), this protein is Probable aldehyde dehydrogenase (FIS1).